A 532-amino-acid chain; its full sequence is O-phosphoserine--tRNA(Cys) ligase (532 aa).

Substrate-binding positions include 186–188 (HMT), 231–233 (SAS), 273–274 (YY), and Asn-317.

This sequence belongs to the class-II aminoacyl-tRNA synthetase family. O-phosphoseryl-tRNA(Cys) synthetase subfamily. In terms of assembly, homotetramer. Interacts with SepCysS.

It carries out the reaction tRNA(Cys) + O-phospho-L-serine + ATP = O-phospho-L-seryl-tRNA(Cys) + AMP + diphosphate. Functionally, catalyzes the attachment of O-phosphoserine (Sep) to tRNA(Cys). This Methanothermobacter thermautotrophicus (strain ATCC 29096 / DSM 1053 / JCM 10044 / NBRC 100330 / Delta H) (Methanobacterium thermoautotrophicum) protein is O-phosphoserine--tRNA(Cys) ligase.